The chain runs to 158 residues: 6,7-dimethyl-8-ribityllumazine synthase (158 aa).

5-amino-6-(D-ribitylamino)uracil-binding positions include F23, 61-63 (SFE), and 85-87 (AVI). 90-91 (ET) is a (2S)-2-hydroxy-3-oxobutyl phosphate binding site. Residue H93 is the Proton donor of the active site. Residue F118 coordinates 5-amino-6-(D-ribitylamino)uracil. R132 contributes to the (2S)-2-hydroxy-3-oxobutyl phosphate binding site.

The protein belongs to the DMRL synthase family.

It catalyses the reaction (2S)-2-hydroxy-3-oxobutyl phosphate + 5-amino-6-(D-ribitylamino)uracil = 6,7-dimethyl-8-(1-D-ribityl)lumazine + phosphate + 2 H2O + H(+). Its pathway is cofactor biosynthesis; riboflavin biosynthesis; riboflavin from 2-hydroxy-3-oxobutyl phosphate and 5-amino-6-(D-ribitylamino)uracil: step 1/2. Its function is as follows. Catalyzes the formation of 6,7-dimethyl-8-ribityllumazine by condensation of 5-amino-6-(D-ribitylamino)uracil with 3,4-dihydroxy-2-butanone 4-phosphate. This is the penultimate step in the biosynthesis of riboflavin. The polypeptide is 6,7-dimethyl-8-ribityllumazine synthase (Prochlorococcus marinus (strain MIT 9312)).